The sequence spans 302 residues: Probable alpha-L-glutamate ligase 1 (302 aa).

Residues 104–287 (MQLLSRKGIG…VANMIIEFIE (184 aa)) enclose the ATP-grasp domain. Residues lysine 141, 178-179 (EY), aspartate 187, and 211-213 (RSN) contribute to the ATP site. Residues aspartate 248, glutamate 260, and asparagine 262 each contribute to the Mg(2+) site. Positions 248, 260, and 262 each coordinate Mn(2+).

It belongs to the RimK family. Mg(2+) serves as cofactor. It depends on Mn(2+) as a cofactor.

The protein is Probable alpha-L-glutamate ligase 1 of Pseudoalteromonas atlantica (strain T6c / ATCC BAA-1087).